Reading from the N-terminus, the 1297-residue chain is DNA-directed RNA polymerase subunit beta' (1297 aa).

Cys60, Cys62, Cys75, and Cys78 together coordinate Zn(2+). Residues Asp535, Asp537, and Asp539 each contribute to the Mg(2+) site. Positions 883, 961, 968, and 971 each coordinate Zn(2+).

Belongs to the RNA polymerase beta' chain family. In terms of assembly, the RNAP catalytic core consists of 2 alpha, 1 beta, 1 beta' and 1 omega subunit. When a sigma factor is associated with the core the holoenzyme is formed, which can initiate transcription. The cofactor is Mg(2+). Zn(2+) is required as a cofactor.

It carries out the reaction RNA(n) + a ribonucleoside 5'-triphosphate = RNA(n+1) + diphosphate. Functionally, DNA-dependent RNA polymerase catalyzes the transcription of DNA into RNA using the four ribonucleoside triphosphates as substrates. The protein is DNA-directed RNA polymerase subunit beta' of Salinispora tropica (strain ATCC BAA-916 / DSM 44818 / JCM 13857 / NBRC 105044 / CNB-440).